Here is a 105-residue protein sequence, read N- to C-terminus: Large ribosomal subunit protein uL24 (105 aa).

Belongs to the universal ribosomal protein uL24 family. As to quaternary structure, part of the 50S ribosomal subunit.

Functionally, one of two assembly initiator proteins, it binds directly to the 5'-end of the 23S rRNA, where it nucleates assembly of the 50S subunit. Its function is as follows. One of the proteins that surrounds the polypeptide exit tunnel on the outside of the subunit. This Methylococcus capsulatus (strain ATCC 33009 / NCIMB 11132 / Bath) protein is Large ribosomal subunit protein uL24.